We begin with the raw amino-acid sequence, 409 residues long: Glutamyl-tRNA(Gln) amidotransferase subunit D (409 aa).

An Asparaginase/glutaminase domain is found at R68–N390. Residues T78, T152, D153, and K230 contribute to the active site.

It belongs to the asparaginase 1 family. GatD subfamily. Heterodimer of GatD and GatE.

The catalysed reaction is L-glutamyl-tRNA(Gln) + L-glutamine + ATP + H2O = L-glutaminyl-tRNA(Gln) + L-glutamate + ADP + phosphate + H(+). Functionally, allows the formation of correctly charged Gln-tRNA(Gln) through the transamidation of misacylated Glu-tRNA(Gln) in organisms which lack glutaminyl-tRNA synthetase. The reaction takes place in the presence of glutamine and ATP through an activated gamma-phospho-Glu-tRNA(Gln). The GatDE system is specific for glutamate and does not act on aspartate. The polypeptide is Glutamyl-tRNA(Gln) amidotransferase subunit D (Thermoplasma acidophilum (strain ATCC 25905 / DSM 1728 / JCM 9062 / NBRC 15155 / AMRC-C165)).